A 2465-amino-acid chain; its full sequence is Highly reducing polyketide synthase milA (2465 aa).

One can recognise a Ketosynthase family 3 (KS3) domain in the interval 1–434 (MEPIAIVGSA…GANCHVILEG (434 aa)). Active-site for beta-ketoacyl synthase activity residues include C172, H311, and H355. Residues 450-476 (KPSLSSSPSLSPTSTSPPTPRTPANSL) form a disordered region. Over residues 451 to 463 (PSLSSSPSLSPTS) the composition is skewed to low complexity. The tract at residues 567–888 (VFTGQGAQWA…CGTLSRAVDD (322 aa)) is malonyl-CoA:ACP transacylase (MAT) domain. The interval 957-1096 (HPLLGVRTNT…GKVQLFVGGD (140 aa)) is N-terminal hotdog fold. Positions 957–1265 (HPLLGVRTNT…LTVSPVAPVT (309 aa)) are dehydratase (DH) domain. Residues 957–1267 (HPLLGVRTNT…VSPVAPVTAD (311 aa)) form the PKS/mFAS DH domain. H989 functions as the Proton acceptor; for dehydratase activity in the catalytic mechanism. The segment at 1111-1267 (LNEIDVDTFY…VSPVAPVTAD (157 aa)) is C-terminal hotdog fold. The Proton donor; for dehydratase activity role is filled by D1174. A disordered region spans residues 1334–1367 (HSTNGLTNGHASTNGHGSTNGHISTNGHSTNGDV). Positions 2095-2269 (TYFLVGMAGS…AASVINLTGV (175 aa)) are ketoreductase (KR)domain. Positions 2384–2459 (DMIFRAFQTV…QVVWSVVHQI (76 aa)) constitute a Carrier domain. S2419 carries the post-translational modification O-(pantetheine 4'-phosphoryl)serine.

It depends on pantetheine 4'-phosphate as a cofactor.

The catalysed reaction is 10 malonyl-CoA + acetyl-CoA + 3 AH2 + 8 NADPH + 18 H(+) = cordypyrone A + 3 A + 10 CO2 + 8 NADP(+) + 11 CoA + 8 H2O. It functions in the pathway secondary metabolite biosynthesis. Functionally, highly reducing polyketide synthase (HR-PKS); part of the gene cluster that mediates the biosynthesis of cordypyrones A and B, 2 pyrones that show modest activities against pathogenic bacteria including methicillin-resistant Staphylococcus aureus (MRSA), Mycobacterium tuberculosis and Bacillus cereus. The HR-PKS milA catalyzes the formation of cordypyrones A via condensation of one acetate with 10 malonate units. Since milA lacks an enoyl reductase domain, the 2 beta-keto processing domains DH and KR of milA collaborate with the trans-enoyl reductase milB to catalyze the different levels of reduction. The cytochrome P450 monooxygenase milC then hydroxylates the C-22 of cordypyrones A to yield cordypyrones B. The chain is Highly reducing polyketide synthase milA from Cordyceps militaris (strain CM01) (Caterpillar fungus).